Consider the following 602-residue polypeptide: Fructan 1-exohydrolase (602 aa).

The N-terminal stretch at 1 to 19 (MAQAWAFLLLPVLLLSSYA) is a signal peptide. The active site involves Asp-81. N-linked (GlcNAc...) asparagine glycans are attached at residues Asn-174, Asn-242, and Asn-254. Cys-452 and Cys-498 form a disulfide bridge.

It belongs to the glycosyl hydrolase 32 family. In terms of tissue distribution, detected in leaves, with maximum levels at the leaf tip.

The catalysed reaction is Hydrolysis of terminal, non-reducing (2-&gt;1)-linked beta-D-fructofuranose residues in fructans.. Its activity is regulated as follows. Inhibited by sucrose. Hydrolyzes inulin-type beta-(2,1)-fructans. Has low activity against beta-(2,6)-linked fructans. May play a role as a beta-(2,1)-trimmer during graminan biosynthesis. The sequence is that of Fructan 1-exohydrolase from Bromus pictus (Patagonian grass).